Consider the following 851-residue polypeptide: Receptor like protein kinase S.2 (851 aa).

The Protein kinase 1 domain occupies 117–436 (FSDELILGSG…LPSFKSHPLY (320 aa)). ATP-binding positions include 123–131 (LGSGGFGRV) and Lys146. Asp248 serves as the catalytic Proton acceptor. The interval 448–471 (SATTTTTRTTMTTTTSTTSFNASS) is disordered. Residues 532–819 (FSDARRVAEV…SILDGSERFF (288 aa)) form the Protein kinase 2 domain. Residues 538-546 (VAEVDFGTA) and Lys560 each bind ATP.

It belongs to the protein kinase superfamily. Ser/Thr protein kinase family.

It carries out the reaction L-seryl-[protein] + ATP = O-phospho-L-seryl-[protein] + ADP + H(+). It catalyses the reaction L-threonyl-[protein] + ATP = O-phospho-L-threonyl-[protein] + ADP + H(+). The protein is Receptor like protein kinase S.2 (LECRKS2) of Arabidopsis thaliana (Mouse-ear cress).